The sequence spans 302 residues: Pyridoxal 5'-phosphate synthase subunit PdxS (302 aa).

Aspartate 32 is a binding site for D-ribose 5-phosphate. Catalysis depends on lysine 89, which acts as the Schiff-base intermediate with D-ribose 5-phosphate. Residue glycine 161 coordinates D-ribose 5-phosphate. Arginine 173 is a binding site for D-glyceraldehyde 3-phosphate. D-ribose 5-phosphate-binding positions include glycine 222 and 243–244; that span reads GS. Positions 278–302 are disordered; it reads GIGKGMKGQSNEDLPDEEKLQGRGV.

This sequence belongs to the PdxS/SNZ family. In the presence of PdxT, forms a dodecamer of heterodimers.

It catalyses the reaction aldehydo-D-ribose 5-phosphate + D-glyceraldehyde 3-phosphate + L-glutamine = pyridoxal 5'-phosphate + L-glutamate + phosphate + 3 H2O + H(+). Its pathway is cofactor biosynthesis; pyridoxal 5'-phosphate biosynthesis. Functionally, catalyzes the formation of pyridoxal 5'-phosphate from ribose 5-phosphate (RBP), glyceraldehyde 3-phosphate (G3P) and ammonia. The ammonia is provided by the PdxT subunit. Can also use ribulose 5-phosphate and dihydroxyacetone phosphate as substrates, resulting from enzyme-catalyzed isomerization of RBP and G3P, respectively. In Halorubrum lacusprofundi (strain ATCC 49239 / DSM 5036 / JCM 8891 / ACAM 34), this protein is Pyridoxal 5'-phosphate synthase subunit PdxS.